The chain runs to 521 residues: MEELQGYLEKDKSWQQHLLYPLLFQEYIYALAHDHSLSGSIFYEPVEVFGYDKKSSLALVKRLNTRIYQQNFLISSVNGSNQKRLVGXNNFFXSLFXSQMIIESFAIFXEILFLRALVSFFGEKKVLKYPNLPSIHSIFPFLEXKLPHLNYVSDILIPHPIHMXILVQILQCWIQDVPFLHSLRFFLHEYHNWNSLLITHKKSICLFSKENKRLFRFLYNSYVSEFEFLLVFFRKQSSYLRLRSSGTFLERTHFYGKIEHFQIXHFAFYSSMSXLFPVVXLKXPFMHYVRYQGKALLASKGTHLVMKKWKYHFVTLWQYYFHFWSQLYRIRINXLSNYSFYFLGYLSSVLINFSAVRNQMLENSFLIDIITKKFDSIIPVILLIESLSKAQFCTVSGHPISKPIWADLSDSDILDRFGWICRNLSHYHSGSSKKQDLYRIKYILRLSCARTLARKHKSTVRTFLRRLGPGLLEEFFTEEERVLSLIFPKTISFILHGSHKERIWYLDIIRMNDLVNYSXLX.

The protein belongs to the intron maturase 2 family. MatK subfamily.

The protein localises to the plastid. The protein resides in the chloroplast. Usually encoded in the trnK tRNA gene intron. Probably assists in splicing its own and other chloroplast group II introns. The chain is Maturase K from Anthericum liliago (St-Bernard's lily).